A 574-amino-acid polypeptide reads, in one-letter code: Frizzled-7 (574 aa).

An N-terminal signal peptide occupies residues 1–32 (MRDPGAAAPLSSLGLCALVLALLGALSAGAGA). The Extracellular segment spans residues 33–256 (QPYHGEKGIS…EEERRFARLW (224 aa)). The FZ domain maps to 44–163 (PDHGFCQPIS…HGAGEICVGQ (120 aa)). 5 cysteine pairs are disulfide-bonded: cysteine 49–cysteine 110, cysteine 57–cysteine 103, cysteine 94–cysteine 131, cysteine 120–cysteine 160, and cysteine 124–cysteine 148. N-linked (GlcNAc...) asparagine glycosylation occurs at asparagine 63. Residue asparagine 164 is glycosylated (N-linked (GlcNAc...) asparagine). A helical transmembrane segment spans residues 257–277 (VGVWSVLCCASTLFTVLTYLV). At 278-288 (DMRRFSYPERP) the chain is on the cytoplasmic side. The chain crosses the membrane as a helical span at residues 289–309 (IIFLSGCYFMVAVAHVAGFLL). Residues 310–336 (EDRAVCVERFSDDGYRTVAQGTKKEGC) are Extracellular-facing. Residues 337 to 357 (TILFMVLYFFGMASSIWWVIL) form a helical membrane-spanning segment. Residues 358–379 (SLTWFLAAGMKWGHEAIEANSQ) lie on the Cytoplasmic side of the membrane. Residues 380–400 (YFHLAAWAVPAVKTITILAMG) form a helical membrane-spanning segment. Topologically, residues 401–423 (QVDGDLLSGVCYVGLSSVDALRG) are extracellular. The helical transmembrane segment at 424–444 (FVLAPLFVYLFIGTSFLLAGF) threads the bilayer. At 445–470 (VSLFRIRTIMKHDGTKTEKLEKLMVR) the chain is on the cytoplasmic side. Residues 471-491 (IGVFSVLYTVPATIVLACYFY) form a helical membrane-spanning segment. Over 492 to 528 (EQAFREHWERTWLLQTCKSYAVPCPPGHFPPMSPDFT) the chain is Extracellular. The helical transmembrane segment at 529–549 (VFMIKYLMTMIVGITTGFWIW) threads the bilayer. Residues 550–574 (SGKTLQSWRRFYHRLSHSSKGETAV) are Cytoplasmic-facing. The Lys-Thr-X-X-X-Trp motif, mediates interaction with the PDZ domain of Dvl family members motif lies at 552-557 (KTLQSW). Residues 572 to 574 (TAV) carry the PDZ-binding motif.

It belongs to the G-protein coupled receptor Fz/Smo family. In terms of assembly, interacts with MAGI3. Interacts with DVL1. Interacts with CCDC88C/DAPLE; the interaction displaces DVL1 from FZD7, leading to inhibition of canonical Wnt signaling and triggering of non-canonical Wnt responses. Interacts with MYOC. Binds to SDCBP; this interaction is increased by inositol trisphosphate (IP3). Interacts with glypican GPC3. (Microbial infection) Interacts with C.difficile toxin TcdB; frizzled receptors constitute the major host receptors for TcdB in the colonic epithelium. Post-translationally, ubiquitinated by ZNRF3, leading to its degradation by the proteasome. High expression in adult skeletal muscle and fetal kidney, followed by fetal lung, adult heart, brain, and placenta. Specifically expressed in squamous cell esophageal carcinomas.

Its subcellular location is the cell membrane. It is found in the endosome membrane. Functionally, receptor for Wnt proteins. Most frizzled receptors are coupled to the beta-catenin canonical signaling pathway, which leads to the activation of disheveled proteins, inhibition of GSK-3 kinase, nuclear accumulation of beta-catenin and activation of Wnt target genes. A second signaling pathway involving PKC and calcium fluxes has been seen for some family members, but it is not yet clear if it represents a distinct pathway or if it can be integrated in the canonical pathway, as PKC seems to be required for Wnt-mediated inactivation of GSK-3 kinase. Both pathways seem to involve interactions with G-proteins. Activation by WNT8 induces expression of beta-catenin target genes. Following ligand activation, binds to CCDC88C/DAPLE which displaces DVL1 from FZD7 and leads to inhibition of canonical Wnt signaling, activation of G-proteins by CCDC88C and triggering of non-canonical Wnt responses. May be involved in transduction and intercellular transmission of polarity information during tissue morphogenesis and/or in differentiated tissues. Its function is as follows. (Microbial infection) Acts as a receptor for C.difficile toxin TcdB in the colonic epithelium. The sequence is that of Frizzled-7 (FZD7) from Homo sapiens (Human).